Here is a 152-residue protein sequence, read N- to C-terminus: Large ribosomal subunit protein bL9 (152 aa).

It belongs to the bacterial ribosomal protein bL9 family.

Binds to the 23S rRNA. The polypeptide is Large ribosomal subunit protein bL9 (Streptococcus thermophilus (strain CNRZ 1066)).